Here is a 294-residue protein sequence, read N- to C-terminus: Protoheme IX farnesyltransferase (294 aa).

9 helical membrane passes run 22–42 (VTQLAVFCAVIGMFLATPDLP), 46–66 (IVIAATIGIWLLAGAAFAINC), 89–109 (ITVPQTLVFSGVIGGAGMWVL), 116–136 (LTMWLTFATFVGYAVIYTIIL), 143–163 (NIVIGGLSGAMPPALGWAAVA), 170–190 (AWILVLIIFIWTPPHFWALAL), 211–231 (AFTQFHIWLYTIALVATTMLP), 232–252 (FAVGMSGLIYLVVAAVLDVIF), and 272–292 (FTYSIIYLSLLFAALLVDHYL).

Belongs to the UbiA prenyltransferase family. Protoheme IX farnesyltransferase subfamily.

Its subcellular location is the cell inner membrane. The enzyme catalyses heme b + (2E,6E)-farnesyl diphosphate + H2O = Fe(II)-heme o + diphosphate. The protein operates within porphyrin-containing compound metabolism; heme O biosynthesis; heme O from protoheme: step 1/1. Converts heme B (protoheme IX) to heme O by substitution of the vinyl group on carbon 2 of heme B porphyrin ring with a hydroxyethyl farnesyl side group. The sequence is that of Protoheme IX farnesyltransferase from Herminiimonas arsenicoxydans.